A 361-amino-acid polypeptide reads, in one-letter code: tRNA/tmRNA (uracil-C(5))-methyltransferase (361 aa).

Residues Gln183, Tyr211, Asn216, Glu232, and Asp294 each contribute to the S-adenosyl-L-methionine site. Catalysis depends on Cys319, which acts as the Nucleophile. Glu353 acts as the Proton acceptor in catalysis.

It belongs to the class I-like SAM-binding methyltransferase superfamily. RNA M5U methyltransferase family. TrmA subfamily.

The catalysed reaction is uridine(54) in tRNA + S-adenosyl-L-methionine = 5-methyluridine(54) in tRNA + S-adenosyl-L-homocysteine + H(+). It catalyses the reaction uridine(341) in tmRNA + S-adenosyl-L-methionine = 5-methyluridine(341) in tmRNA + S-adenosyl-L-homocysteine + H(+). Dual-specificity methyltransferase that catalyzes the formation of 5-methyluridine at position 54 (m5U54) in all tRNAs, and that of position 341 (m5U341) in tmRNA (transfer-mRNA). This is tRNA/tmRNA (uracil-C(5))-methyltransferase from Acinetobacter baylyi (strain ATCC 33305 / BD413 / ADP1).